The sequence spans 197 residues: Syndecan-4 (197 aa).

The first 19 residues, 1–19 (MPLPRAAFLLGLLLAAAAA), serve as a signal peptide directing secretion. Residues 20-147 (ESVRETETMD…SIFERTEVLT (128 aa)) lie on the Extracellular side of the membrane. O-linked (Xyl...) (glycosaminoglycan) serine glycans are attached at residues Ser38, Ser65, and Ser67. N-linked (GlcNAc...) asparagine glycosylation is found at Asn124 and Asn136. A helical transmembrane segment spans residues 148–168 (ALIAGGAVGLLFAVFLILLLV). Residues 169–197 (YRMKKKDEGSYDLGKKPIYKKAPTNEFYA) are Cytoplasmic-facing.

The protein belongs to the syndecan proteoglycan family. In terms of assembly, interacts with SDOS. Post-translationally, O-glycosylated; contains both chondroitin sulfate and heparan sulfate. Ser-38, Ser-65 and Ser-67 can all be modified by either chondroitin sulfate or heparan sulfate, and the protein exists in forms that contain only chondroitin sulfate, only heparan sulfate and both chondroitin sulfate and heparan sulfate.

The protein resides in the membrane. Cell surface proteoglycan which regulates exosome biogenesis in concert with SDCBP and PDCD6IP. This is Syndecan-4 (SDC4) from Gallus gallus (Chicken).